Consider the following 411-residue polypeptide: Phospholipase ABHD3 (411 aa).

Residues 25–45 (VGFFGSGVGFSLILGFSVAYA) traverse the membrane as a helical; Signal-anchor for type II membrane protein segment. Positions 140–247 (PTVLLLPGLT…PLKAAATFSV (108 aa)) constitute an AB hydrolase-1 domain. Active-site charge relay system residues include Ser220, Asp346, and His375.

It belongs to the AB hydrolase superfamily. AB hydrolase 4 family.

The protein resides in the membrane. The catalysed reaction is a 1,2-diacyl-sn-glycero-3-phosphocholine + H2O = a 1-acyl-sn-glycero-3-phosphocholine + a fatty acid + H(+). The enzyme catalyses a 1,2-diacyl-sn-glycero-3-phosphocholine + H2O = a 2-acyl-sn-glycero-3-phosphocholine + a fatty acid + H(+). It catalyses the reaction 1-tetradecanoyl-2-(9Z,12Z-octadecadienoyl)-sn-glycero-3-phosphocholine + H2O = 2-(9Z,12Z-octadecadienoyl)-sn-glycero-3-phosphocholine + tetradecanoate + H(+). It carries out the reaction 1-tetradecanoyl-2-(9Z,12Z-octadecadienoyl)-sn-glycero-3-phosphocholine + H2O = 1-tetradecanoyl-sn-glycero-3-phosphocholine + (9Z,12Z)-octadecadienoate + H(+). The catalysed reaction is 1-tetradecanoyl-2-(5Z,8Z,11Z,14Z-eicosatetraenoyl)-sn-glycero-3-phosphocholine + H2O = 2-(5Z,8Z,11Z,14Z)-eicosatetraenoyl-sn-glycero-3-phosphocholine + tetradecanoate + H(+). The enzyme catalyses 1-tetradecanoyl-2-(4Z,7Z,10Z,13Z,16Z,19Z-docosahexaenoyl)-sn-glycero-3-phosphocholine + H2O = 2-(4Z,7Z,10Z,13Z,16Z,19Z-docosahexaenoyl)-sn-glycero-3-phosphocholine + tetradecanoate + H(+). It catalyses the reaction 1,2-ditetradecanoyl-sn-glycero-3-phosphocholine + H2O = 2-tetradecanoyl-sn-glycero-3-phosphocholine + tetradecanoate + H(+). It carries out the reaction 1-octadecanoyl-2-acetyl-sn-glycero-3-phosphocholine + H2O = 1-octadecanoyl-sn-glycero-3-phosphocholine + acetate + H(+). The catalysed reaction is 1,2-ditetradecanoyl-sn-glycero-3-phosphocholine + H2O = 1-tetradecanoyl-sn-glycero-3-phosphocholine + tetradecanoate + H(+). The enzyme catalyses 1-octadecanoyl-2-pentanoyl-sn-glycero-3-phosphocholine + H2O = pentanoate + 1-octadecanoyl-sn-glycero-3-phosphocholine + H(+). It catalyses the reaction 1-octadecanoyl-2-hexanoyl-sn-glycero-3-phosphocholine + H2O = hexanoate + 1-octadecanoyl-sn-glycero-3-phosphocholine + H(+). It carries out the reaction 1-octadecanoyl-2-octanoyl-sn-glycero-3-phosphocholine + H2O = 1-octadecanoyl-sn-glycero-3-phosphocholine + octanoate + H(+). The catalysed reaction is 1-octadecanoyl-2-nonanoyl-sn-glycero-3-phosphocholine + H2O = nonanoate + 1-octadecanoyl-sn-glycero-3-phosphocholine + H(+). The enzyme catalyses 1-O-hexadecyl-2-nonadioyl-sn-glycero-3-phosphocholine + H2O = nonanedioate + 1-O-hexadecyl-sn-glycero-3-phosphocholine + H(+). It catalyses the reaction 1-hexadecanoyl-2-nonadioyl-sn-glycero-3-phosphocholine + H2O = nonanedioate + 1-hexadecanoyl-sn-glycero-3-phosphocholine + H(+). It carries out the reaction 1-hexadecanoyl-2-(9-oxononanoyl)-sn-glycero-3-phosphocholine + H2O = 9-oxononanoate + 1-hexadecanoyl-sn-glycero-3-phosphocholine + H(+). The catalysed reaction is 1-hexadecanoyl-2-(5-oxopentanoyl)-sn-glycero-3-phosphocholine + H2O = 5-oxopentanoate + 1-hexadecanoyl-sn-glycero-3-phosphocholine + H(+). The enzyme catalyses 1-hexadecanoyl-2-glutaroyl-sn-glycero-3-phosphocholine + H2O = glutarate + 1-hexadecanoyl-sn-glycero-3-phosphocholine + H(+). It catalyses the reaction 1-O-hexadecyl-2-acetyl-sn-glycero-3-phosphocholine + H2O = 1-O-hexadecyl-sn-glycero-3-phosphocholine + acetate + H(+). Phospholipase that may play a role in phospholipids remodeling. May selectively cleave myristate (C14)-containing phosphatidylcholines through its predominant phospholipase 1 activity, cleaving preferentially acyl groups in sn1 position. In parallel, may have a minor phospholipase 2 activity acting on acyl groups in position sn2. In addition to (C14)-containing phosphatidylcholines, may also act on other medium-chain-containing and oxidatively truncated phospholipids. The chain is Phospholipase ABHD3 from Bos taurus (Bovine).